Consider the following 59-residue polypeptide: Ferredoxin (59 aa).

One can recognise a 4Fe-4S ferredoxin-type domain in the interval 2–29 (KVSVDKDACIGCGVCASICPDVFEMDDD). [4Fe-4S] cluster-binding residues include cysteine 10, cysteine 13, and cysteine 16. Cysteine 20 and cysteine 43 form a disulfide bridge. Residue cysteine 51 participates in [4Fe-4S] cluster binding.

[4Fe-4S] cluster serves as cofactor. [3Fe-4S] cluster is required as a cofactor.

Its function is as follows. Ferredoxins are iron-sulfur proteins that transfer electrons in a wide variety of metabolic reactions. The protein is Ferredoxin of Thermococcus litoralis.